The chain runs to 647 residues: Homologous recombination OB-fold protein (647 aa).

Position 47 is a phosphoserine (serine 47). Disordered regions lie at residues 284–361 (ARGT…GPQG), 380–399 (SRTPQQPTHPSTRAKTRRFP), and 581–631 (SFLK…DDLD). Arginine 285, arginine 295, arginine 329, and arginine 337 each carry asymmetric dimethylarginine. A compositionally biased stretch (polar residues) spans 287–308 (TIQSSPQNRFPCQPFQSPSSWL). Low complexity predominate over residues 319–332 (TPNSSCSTPSRTSS). Positions 380-390 (SRTPQQPTHPS) are enriched in polar residues. Positions 618 to 631 (ASPEEELPEADDLD) are enriched in acidic residues.

As to quaternary structure, interacts with MCM8; this interaction is necessary for MCM8-MCM9 helicase complex recruitment to DNA damage sites. Interacts with RPA1; this interaction associates HROB with the RPA complex.

It localises to the nucleus. The protein localises to the chromosome. In terms of biological role, DNA-binding protein involved in homologous recombination that acts by recruiting the MCM8-MCM9 helicase complex to sites of DNA damage to promote DNA repair synthesis. This is Homologous recombination OB-fold protein from Homo sapiens (Human).